The chain runs to 159 residues: MSDVENQPFFNIQRVYLKDMSLEQPNSPAIFLEQDMPSVEVEVDVKAERLAESVFEVVVSGTVTAKVKDKVAFLIEAKQAGIFDIRNIPDEQLDPLVGIACPTILFPYLRSNIADAITRAGFPPIHLAEINFQALYEQRLAQLQQQAGAAGAPNGTTLN.

It belongs to the SecB family. As to quaternary structure, homotetramer, a dimer of dimers. One homotetramer interacts with 1 SecA dimer.

It localises to the cytoplasm. Its function is as follows. One of the proteins required for the normal export of preproteins out of the cell cytoplasm. It is a molecular chaperone that binds to a subset of precursor proteins, maintaining them in a translocation-competent state. It also specifically binds to its receptor SecA. This Burkholderia vietnamiensis (strain G4 / LMG 22486) (Burkholderia cepacia (strain R1808)) protein is Protein-export protein SecB.